We begin with the raw amino-acid sequence, 442 residues long: Chromosomal replication initiator protein DnaA (442 aa).

The segment at 1–84 is domain I, interacts with DnaA modulators; it reads MSVLWSHCIS…LEIGSRAAEA (84 aa). The interval 84-105 is domain II; it reads AAQMRSANPPRKTAPARKQVPN. The segment at 106-322 is domain III, AAA+ region; the sequence is NLNSAFIFGN…GALRRVIANA (217 aa). The ATP site is built by Gly150, Gly152, Lys153, and Thr154. The interval 323–442 is domain IV, binds dsDNA; that stretch reads QFTGRPITLE…FSNLLRILSN (120 aa).

It belongs to the DnaA family. As to quaternary structure, oligomerizes as a right-handed, spiral filament on DNA at oriC.

The protein resides in the cytoplasm. Its function is as follows. Plays an essential role in the initiation and regulation of chromosomal replication. ATP-DnaA binds to the origin of replication (oriC) to initiate formation of the DNA replication initiation complex once per cell cycle. Binds the DnaA box (a 9 base pair repeat at the origin) and separates the double-stranded (ds)DNA. Forms a right-handed helical filament on oriC DNA; dsDNA binds to the exterior of the filament while single-stranded (ss)DNA is stabiized in the filament's interior. The ATP-DnaA-oriC complex binds and stabilizes one strand of the AT-rich DNA unwinding element (DUE), permitting loading of DNA polymerase. After initiation quickly degrades to an ADP-DnaA complex that is not apt for DNA replication. Binds acidic phospholipids. The polypeptide is Chromosomal replication initiator protein DnaA (Methylococcus capsulatus (strain ATCC 33009 / NCIMB 11132 / Bath)).